Reading from the N-terminus, the 600-residue chain is MSMRTEYCGLVTEHLLGQTVSLCGWVHRRRDHGGVIFIDLRDREGLVQVVCDPDRAEMFAAAEGVRNEFCIQVKGLVRGRPEGTINAGLKSGRIEVLCHELNVLNASVTPPFQLDDDNLSETTRLTHRVLDLRRPQMQHNLRLRYRVAIEARKYLDEQGFIDIETPMLTKSTPEGARDYLVPSRVNAGQFFALPQSPQLFKQLLMVANFDRYYQITKCFRDEDLRADRQPEFTQIDCETSFLGEQEIRDLFEDMIRHIFKTTIDVELDATFPVMPYSEAMARFGSDKPDLRVKLEFTELTDAMKDVDFKVFSTPANTKDGRVAALRVPKGGELTRGDIDGYTEFVRIYGAKGLAWIKVNERAKGRDGLQSPIVKNLHDASIAAILERTGAQDGDIIFFAADRAKVVNDSLGALRLKIGHSEFGKANGLVEAGWKPLWVVDFPMFEYDDEEARYVAAHHPFTSPKDEHLEYLETDPGRCLAKAYDMVLNGWEIGGGSVRIHREEVQSKVFRALKIGPEEAQAKFGFLLDALQYGAPPHGGIAFGLDRIVTMMAGADSIRDVIAFPKTQRAQCLLTQAPSPVDERQLRELHIRLRQPEQPKA.

Glutamate 174 is an L-aspartate binding site. An aspartate region spans residues 198 to 201 (QLFK). Arginine 220 provides a ligand contact to L-aspartate. Residues 220 to 222 (RDE) and glutamine 229 contribute to the ATP site. Histidine 457 lines the L-aspartate pocket. Glutamate 491 serves as a coordination point for ATP. Arginine 498 provides a ligand contact to L-aspartate. ATP is bound at residue 543 to 546 (GLDR).

The protein belongs to the class-II aminoacyl-tRNA synthetase family. Type 1 subfamily. In terms of assembly, homodimer.

Its subcellular location is the cytoplasm. The catalysed reaction is tRNA(Asx) + L-aspartate + ATP = L-aspartyl-tRNA(Asx) + AMP + diphosphate. Aspartyl-tRNA synthetase with relaxed tRNA specificity since it is able to aspartylate not only its cognate tRNA(Asp) but also tRNA(Asn). Reaction proceeds in two steps: L-aspartate is first activated by ATP to form Asp-AMP and then transferred to the acceptor end of tRNA(Asp/Asn). In Burkholderia pseudomallei (strain 668), this protein is Aspartate--tRNA(Asp/Asn) ligase.